Here is an 89-residue protein sequence, read N- to C-terminus: MADETVAQEVIINVPLRDAKASSRKRRADTAVSILRNFVSKKMKIDKGKIWIDPKVSEKIWERGREHIPSKMSVKVIKLEEGTTEIIMP.

This sequence belongs to the eukaryotic ribosomal protein eL31 family.

This Thermoplasma acidophilum (strain ATCC 25905 / DSM 1728 / JCM 9062 / NBRC 15155 / AMRC-C165) protein is Large ribosomal subunit protein eL31 (rpl31e).